The primary structure comprises 213 residues: Probable glutathione S-transferase DHAR1, cytosolic (213 aa).

Glutathione-binding residues include Lys-8 and Asp-19. L-ascorbate contacts are provided by Lys-8 and Asp-19. Residues 10–89 (AVGHPDTLGD…VIEEKYPTPS (80 aa)) form the GST N-terminal domain. Cys-20 acts as the Nucleophile in catalysis. Lys-47, Val-60, Ser-74, His-160, and Trp-207 together coordinate glutathione. Positions 73-213 (DSDVITQVIE…IAGWAPKVNA (141 aa)) constitute a GST C-terminal domain. Lys-210 lines the L-ascorbate pocket.

Belongs to the GST superfamily. DHAR family. As to quaternary structure, monomer.

The protein resides in the cytoplasm. It is found in the cytosol. It carries out the reaction RX + glutathione = an S-substituted glutathione + a halide anion + H(+). It catalyses the reaction L-dehydroascorbate + 2 glutathione = glutathione disulfide + L-ascorbate. Functionally, involved in ascorbate homeostasis. Maintains redox pools of ascorbate by recycling dihydroascorbate (DHA) to ascorbate. Involved in scavenging reactive oxygen species (ROS) under oxidative stresses. Possesses dehydroascorbate reductase (DHAR) activity in vitro. May function via a ping-pong reaction mechanism with an electron transfer at the active site. Possesses chaperone-like activity in vitro. The sequence is that of Probable glutathione S-transferase DHAR1, cytosolic from Oryza sativa subsp. japonica (Rice).